We begin with the raw amino-acid sequence, 148 residues long: Deoxyuridine 5'-triphosphate nucleotidohydrolase (148 aa).

Substrate is bound by residues 68–70 (RSG), N81, 85–87 (TID), and K95.

The protein belongs to the dUTPase family. It depends on Mg(2+) as a cofactor.

It catalyses the reaction dUTP + H2O = dUMP + diphosphate + H(+). The protein operates within pyrimidine metabolism; dUMP biosynthesis; dUMP from dCTP (dUTP route): step 2/2. Its function is as follows. This enzyme is involved in nucleotide metabolism: it produces dUMP, the immediate precursor of thymidine nucleotides and it decreases the intracellular concentration of dUTP so that uracil cannot be incorporated into DNA. This chain is Deoxyuridine 5'-triphosphate nucleotidohydrolase, found in Rickettsia massiliae (strain Mtu5).